A 483-amino-acid polypeptide reads, in one-letter code: Sodium/pantothenate symporter (483 aa).

Residues 1–2 (MQ) are Periplasmic-facing. Residues 3-23 (LEVILPLVAYLVVVFGISVYA) form a helical membrane-spanning segment. The Cytoplasmic segment spans residues 24–42 (MRKRSTGTFLNEYFLGSRS). A helical membrane pass occupies residues 43–63 (MGGIVLAMTLTATYISASSFI). The Periplasmic portion of the chain corresponds to 64–73 (GGPGAAYKYG). A helical transmembrane segment spans residues 74 to 94 (LGWVLLAMIQLPAVWLSLGIL). Topologically, residues 95 to 123 (GKKFAILARRYNAVTLNDMLFARYQSRLL) are cytoplasmic. The chain crosses the membrane as a helical span at residues 124 to 144 (VWLASLSLLVAFVGAMTVQFI). Residues 145–157 (GGARLLETAAGIP) are Periplasmic-facing. The helical transmembrane segment at 158–178 (YETGLLIFGISIALYTAFGGF) threads the bilayer. Residues 179–189 (RASVLNDTMQG) are Cytoplasmic-facing. Residues 190 to 210 (LVMLIGTVVLLIGVVHAAGGL) form a helical membrane-spanning segment. Over 211–232 (SNAVQTLQTIDPQLVTPQGADD) the chain is Periplasmic. A helical transmembrane segment spans residues 233 to 253 (ILSPAFMTSFWVLVCFGVIGL). Residues 254–272 (PHTAVRCISYKDSKAVHRG) are Cytoplasmic-facing. Residues 273–293 (IIIGTIVVAILMFGMHLAGAL) form a helical membrane-spanning segment. Residues 294 to 305 (GRAVIPDLTVPD) are Periplasmic-facing. A helical membrane pass occupies residues 306–326 (LVIPTLMVKVLPPFAAGIFLA). The Cytoplasmic segment spans residues 327–368 (APMAAIMSTINAQLLQSSATIIKDLYLNIRPDQMQNETRLKR). Residues 369–389 (MSAVITLVLGALLLLAAWKPP) form a helical membrane-spanning segment. Topologically, residues 390–391 (EM) are periplasmic. A helical transmembrane segment spans residues 392 to 412 (IIWLNLLAFGGLEAVFLWPLV). Topologically, residues 413–423 (LGLYWERANAK) are cytoplasmic. Residues 424–444 (GALSAMIVGGVLYAVLATLNI) form a helical membrane-spanning segment. Gln445 is a topological domain (periplasmic). Residues 446-466 (YLGFHPIVPSLLLSLLAFLVG) form a helical membrane-spanning segment. The Cytoplasmic portion of the chain corresponds to 467-483 (NRFGTSVPQATVLTTDK).

It belongs to the sodium:solute symporter (SSF) (TC 2.A.21) family.

It localises to the cell inner membrane. It catalyses the reaction (R)-pantothenate(in) + Na(+)(in) = (R)-pantothenate(out) + Na(+)(out). Pantothenate uptake is not reduced in osmotically shocked cells or by ATP depletion with arsenate, but is reduced greater than 90% by the dissipation of the membrane electrochemical gradient with 2,4-dinitrophenol. Its function is as follows. Catalyzes the sodium-dependent uptake of extracellular pantothenate. This chain is Sodium/pantothenate symporter, found in Escherichia coli (strain K12).